The primary structure comprises 365 residues: Isopentenyl-diphosphate delta-isomerase (365 aa).

Position 8 to 9 (8 to 9) interacts with substrate; that stretch reads RK. Residues 67-69, Ser97, and Asn126 each bind FMN; that span reads SIT. 97–99 serves as a coordination point for substrate; the sequence is SQR. Substrate is bound at residue Gln160. Mg(2+) is bound at residue Glu161. FMN contacts are provided by residues Lys192, Thr222, 272–274, and 293–294; these read GIR and AL.

The protein belongs to the IPP isomerase type 2 family. As to quaternary structure, homooctamer. Dimer of tetramers. The cofactor is FMN. It depends on NADPH as a cofactor. Mg(2+) is required as a cofactor.

It is found in the cytoplasm. It catalyses the reaction isopentenyl diphosphate = dimethylallyl diphosphate. Functionally, involved in the biosynthesis of isoprenoids. Catalyzes the 1,3-allylic rearrangement of the homoallylic substrate isopentenyl (IPP) to its allylic isomer, dimethylallyl diphosphate (DMAPP). The chain is Isopentenyl-diphosphate delta-isomerase from Methanosarcina mazei (strain ATCC BAA-159 / DSM 3647 / Goe1 / Go1 / JCM 11833 / OCM 88) (Methanosarcina frisia).